We begin with the raw amino-acid sequence, 386 residues long: Succinate--CoA ligase [ADP-forming] subunit beta (386 aa).

One can recognise an ATP-grasp domain in the interval 9–244 (KELLRSYGVP…ETEEDPREVE (236 aa)). Residues Lys46, 53-55 (GRG), Glu99, Cys102, and Glu107 each bind ATP. Mg(2+) is bound by residues Asn199 and Asp213. Substrate-binding positions include Asn264 and 321 to 323 (GIM).

It belongs to the succinate/malate CoA ligase beta subunit family. Heterotetramer of two alpha and two beta subunits. The cofactor is Mg(2+).

It carries out the reaction succinate + ATP + CoA = succinyl-CoA + ADP + phosphate. The catalysed reaction is GTP + succinate + CoA = succinyl-CoA + GDP + phosphate. It participates in carbohydrate metabolism; tricarboxylic acid cycle; succinate from succinyl-CoA (ligase route): step 1/1. Functionally, succinyl-CoA synthetase functions in the citric acid cycle (TCA), coupling the hydrolysis of succinyl-CoA to the synthesis of either ATP or GTP and thus represents the only step of substrate-level phosphorylation in the TCA. The beta subunit provides nucleotide specificity of the enzyme and binds the substrate succinate, while the binding sites for coenzyme A and phosphate are found in the alpha subunit. This is Succinate--CoA ligase [ADP-forming] subunit beta from Exiguobacterium sibiricum (strain DSM 17290 / CCUG 55495 / CIP 109462 / JCM 13490 / 255-15).